The sequence spans 895 residues: Zyg eleven-related protein 1 (895 aa).

Disordered regions lie at residues 58 to 78 and 195 to 221; these read HGPA…PDQG and RGQM…SDHQ. Low complexity predominate over residues 205 to 220; sequence SPLSPSSQPSSIQSDH.

As to quaternary structure, interacts with elc-1. Part of an E3 ubiquitin ligase complex including zer-11, cul-2 and elc-1.

In terms of biological role, acts as a target recruitment subunit in the E3 ubiquitin ligase complex zer-1-cul-2-elc-1. This chain is Zyg eleven-related protein 1 (zer-1), found in Caenorhabditis elegans.